Here is a 43-residue protein sequence, read N- to C-terminus: uncharacterized protein (43 aa).

Residues 21-41 (SSFALIVVLFILLIIVGAAIF) traverse the membrane as a helical segment.

It belongs to the SscA family.

Its subcellular location is the membrane. This is an uncharacterized protein from Bacillus subtilis (strain 168).